The chain runs to 276 residues: Inositol-1-monophosphatase ImpA (276 aa).

The Mg(2+) site is built by E74, D90, I92, and D93. Position 74 (E74) interacts with substrate. Residues 92 to 95 (IDGT), R192, and D221 contribute to the substrate site. D221 is a binding site for Mg(2+).

It belongs to the inositol monophosphatase superfamily. Mg(2+) serves as cofactor.

The enzyme catalyses a myo-inositol phosphate + H2O = myo-inositol + phosphate. It functions in the pathway polyol metabolism; myo-inositol biosynthesis; myo-inositol from D-glucose 6-phosphate: step 2/2. Functionally, catalyzes the dephosphorylation of inositol 1-phosphate (I-1-P) to yield free myo-inositol, a key metabolite in mycobacteria. In Mycolicibacterium smegmatis (strain ATCC 700084 / mc(2)155) (Mycobacterium smegmatis), this protein is Inositol-1-monophosphatase ImpA (impA).